Here is a 72-residue protein sequence, read N- to C-terminus: Putative membrane protein insertion efficiency factor (72 aa).

Belongs to the UPF0161 family.

It is found in the cell inner membrane. Functionally, could be involved in insertion of integral membrane proteins into the membrane. This chain is Putative membrane protein insertion efficiency factor, found in Trichodesmium erythraeum (strain IMS101).